The primary structure comprises 87 residues: UPF0250 protein ECA1299 (87 aa).

This sequence belongs to the UPF0250 family.

The sequence is that of UPF0250 protein ECA1299 from Pectobacterium atrosepticum (strain SCRI 1043 / ATCC BAA-672) (Erwinia carotovora subsp. atroseptica).